The sequence spans 128 residues: Probable 4-amino-4-deoxy-L-arabinose-phosphoundecaprenol flippase subunit ArnF (128 aa).

The Cytoplasmic portion of the chain corresponds to 1–10; that stretch reads MKGYLWGGAS. A helical membrane pass occupies residues 11-31; that stretch reads VVLVTVAQLVLKWGMMNIPLL. Residues 32–47 lie on the Periplasmic side of the membrane; sequence SLADINVQFLTMYFVQ. A helical membrane pass occupies residues 48 to 68; sequence LASVMCGLMGYALSMLCWFFA. Residues 69 to 77 are Cytoplasmic-facing; the sequence is LRYLPLNRA. A helical membrane pass occupies residues 78–98; sequence YPLLSLSYALVYLGAVLLPWF. Residues 99–101 lie on the Periplasmic side of the membrane; sequence NEP. The chain crosses the membrane as a helical span at residues 102 to 122; the sequence is ATLLKTLGAGFILLGIWLINI. At 123 to 128 the chain is on the cytoplasmic side; the sequence is KPIKAS.

This sequence belongs to the ArnF family. As to quaternary structure, heterodimer of ArnE and ArnF.

It is found in the cell inner membrane. It functions in the pathway bacterial outer membrane biogenesis; lipopolysaccharide biosynthesis. Translocates 4-amino-4-deoxy-L-arabinose-phosphoundecaprenol (alpha-L-Ara4N-phosphoundecaprenol) from the cytoplasmic to the periplasmic side of the inner membrane. The chain is Probable 4-amino-4-deoxy-L-arabinose-phosphoundecaprenol flippase subunit ArnF from Yersinia pseudotuberculosis serotype O:1b (strain IP 31758).